The chain runs to 197 residues: Nucleoside triphosphate pyrophosphatase (197 aa).

Aspartate 71 serves as the catalytic Proton acceptor.

Belongs to the Maf family. Requires a divalent metal cation as cofactor.

Its subcellular location is the cytoplasm. It catalyses the reaction a ribonucleoside 5'-triphosphate + H2O = a ribonucleoside 5'-phosphate + diphosphate + H(+). The catalysed reaction is a 2'-deoxyribonucleoside 5'-triphosphate + H2O = a 2'-deoxyribonucleoside 5'-phosphate + diphosphate + H(+). In terms of biological role, nucleoside triphosphate pyrophosphatase. May have a dual role in cell division arrest and in preventing the incorporation of modified nucleotides into cellular nucleic acids. This Nostoc punctiforme (strain ATCC 29133 / PCC 73102) protein is Nucleoside triphosphate pyrophosphatase.